Reading from the N-terminus, the 669-residue chain is Methionine--tRNA ligase (669 aa).

The 'HIGH' region motif lies at 14-24 (YYPSGKLHIGN). Histidine 161 contributes to the Zn(2+) binding site. Residues 309 to 313 (KMSKS) carry the 'KMSKS' region motif. Lysine 312 provides a ligand contact to ATP. The 104-residue stretch at 566 to 669 (DFDKVELKVA…KEMPNGAGIA (104 aa)) folds into the tRNA-binding domain.

The protein belongs to the class-I aminoacyl-tRNA synthetase family. MetG type 2B subfamily. In terms of assembly, homodimer.

It localises to the cytoplasm. It carries out the reaction tRNA(Met) + L-methionine + ATP = L-methionyl-tRNA(Met) + AMP + diphosphate. Functionally, is required not only for elongation of protein synthesis but also for the initiation of all mRNA translation through initiator tRNA(fMet) aminoacylation. The polypeptide is Methionine--tRNA ligase (Enterococcus faecalis (strain ATCC 700802 / V583)).